The sequence spans 478 residues: Adenosylhomocysteinase (478 aa).

Substrate contacts are provided by Thr57, Asp139, and Glu201. 202 to 204 (TTT) is an NAD(+) binding site. 2 residues coordinate substrate: Lys231 and Asp235. Residues Asn236, 265-270 (GYGDVG), Glu288, Asn323, 344-346 (IGH), and Asn392 each bind NAD(+).

The protein belongs to the adenosylhomocysteinase family. NAD(+) is required as a cofactor.

It is found in the cytoplasm. The catalysed reaction is S-adenosyl-L-homocysteine + H2O = L-homocysteine + adenosine. The protein operates within amino-acid biosynthesis; L-homocysteine biosynthesis; L-homocysteine from S-adenosyl-L-homocysteine: step 1/1. May play a key role in the regulation of the intracellular concentration of adenosylhomocysteine. This Corynebacterium efficiens (strain DSM 44549 / YS-314 / AJ 12310 / JCM 11189 / NBRC 100395) protein is Adenosylhomocysteinase.